The primary structure comprises 645 residues: Transcription factor AN6788 (645 aa).

A disordered region spans residues 1 to 21 (MPQKAQPQPRESPFKPARQQP). Positions 25 to 52 (CEECRKRKARCDRAKPQCGSCMMTGRVC) form a DNA-binding region, zn(2)-C6 fungal-type. Over residues 113 to 131 (PDFEPNSHPRHSQSHDRRQ) the composition is skewed to basic and acidic residues. The interval 113 to 170 (PDFEPNSHPRHSQSHDRRQQSGPDSSPDTQHELPFLQSPPAARDADSAERALLPSPVS) is disordered.

It localises to the nucleus. Functionally, transcription factors AN6788 and AN6790 act in tandem to regulate the expression of the non-reducing polyketide synthase pkfA from the aspernidine A biosynthesis cluster. They do not control the expression of the other genes involved in aspernidine A biosynthesis, nor do they regulate the expression of the highly reducing polyketide synthase AN6791 and the esterase AN6793 with which they are predicted to form a secondary metabolite biosynthesis cluster. The chain is Transcription factor AN6788 from Emericella nidulans (strain FGSC A4 / ATCC 38163 / CBS 112.46 / NRRL 194 / M139) (Aspergillus nidulans).